Consider the following 217-residue polypeptide: 3,4-dihydroxy-2-butanone 4-phosphate synthase (217 aa).

Residues 37–38 (RE), aspartate 42, 150–154 (RRGHT), and glutamate 174 contribute to the D-ribulose 5-phosphate site. Glutamate 38 lines the Mg(2+) pocket. Position 153 (histidine 153) interacts with Mg(2+).

This sequence belongs to the DHBP synthase family. In terms of assembly, homodimer. It depends on Mg(2+) as a cofactor. Requires Mn(2+) as cofactor.

The enzyme catalyses D-ribulose 5-phosphate = (2S)-2-hydroxy-3-oxobutyl phosphate + formate + H(+). Its pathway is cofactor biosynthesis; riboflavin biosynthesis; 2-hydroxy-3-oxobutyl phosphate from D-ribulose 5-phosphate: step 1/1. Its function is as follows. Catalyzes the conversion of D-ribulose 5-phosphate to formate and 3,4-dihydroxy-2-butanone 4-phosphate. The polypeptide is 3,4-dihydroxy-2-butanone 4-phosphate synthase (Shewanella baltica (strain OS223)).